The sequence spans 210 residues: Putative 3-methyladenine DNA glycosylase (210 aa).

This sequence belongs to the DNA glycosylase MPG family.

The protein is Putative 3-methyladenine DNA glycosylase of Lactobacillus helveticus (strain DPC 4571).